We begin with the raw amino-acid sequence, 67 residues long: Large ribosomal subunit protein uL29 (67 aa).

The protein belongs to the universal ribosomal protein uL29 family.

In Wolbachia pipientis wMel, this protein is Large ribosomal subunit protein uL29.